The primary structure comprises 108 residues: Large ribosomal subunit protein uL24 (108 aa).

It belongs to the universal ribosomal protein uL24 family. In terms of assembly, part of the 50S ribosomal subunit.

Its function is as follows. One of two assembly initiator proteins, it binds directly to the 5'-end of the 23S rRNA, where it nucleates assembly of the 50S subunit. In terms of biological role, one of the proteins that surrounds the polypeptide exit tunnel on the outside of the subunit. The polypeptide is Large ribosomal subunit protein uL24 (Mycoplasma genitalium (strain ATCC 33530 / DSM 19775 / NCTC 10195 / G37) (Mycoplasmoides genitalium)).